Reading from the N-terminus, the 662-residue chain is UvrABC system protein B (662 aa).

Residues 25-182 (KGIEKREKFQ…KKLVEIQYER (158 aa)) enclose the Helicase ATP-binding domain. 38–45 (GVTGSGKT) contributes to the ATP binding site. The short motif at 91 to 114 (YYDYYQPEAYVAQSDTYIEKDASI) is the Beta-hairpin element. One can recognise a Helicase C-terminal domain in the interval 429–595 (QIDDLYTSIQ…TIIKDIREVI (167 aa)). Residues 622–657 (DKLIEKYEEEMKEAAQNLQFEKAAHLRDVIYKLKKD) enclose the UVR domain.

Belongs to the UvrB family. In terms of assembly, forms a heterotetramer with UvrA during the search for lesions. Interacts with UvrC in an incision complex.

It localises to the cytoplasm. The UvrABC repair system catalyzes the recognition and processing of DNA lesions. A damage recognition complex composed of 2 UvrA and 2 UvrB subunits scans DNA for abnormalities. Upon binding of the UvrA(2)B(2) complex to a putative damaged site, the DNA wraps around one UvrB monomer. DNA wrap is dependent on ATP binding by UvrB and probably causes local melting of the DNA helix, facilitating insertion of UvrB beta-hairpin between the DNA strands. Then UvrB probes one DNA strand for the presence of a lesion. If a lesion is found the UvrA subunits dissociate and the UvrB-DNA preincision complex is formed. This complex is subsequently bound by UvrC and the second UvrB is released. If no lesion is found, the DNA wraps around the other UvrB subunit that will check the other stand for damage. The protein is UvrABC system protein B of Clostridium botulinum (strain Kyoto / Type A2).